Here is a 245-residue protein sequence, read N- to C-terminus: uncharacterized protein (245 aa).

Transmembrane regions (helical) follow at residues 29–51 (LVVL…RIGM) and 61–83 (TILF…LMLH).

The protein localises to the cell membrane. This is an uncharacterized protein from Treponema pallidum (strain Nichols).